The primary structure comprises 349 residues: Transmembrane protein 59-like (349 aa).

The first 22 residues, 1 to 22, serve as a signal peptide directing secretion; it reads MDSVALMPLLLLLLLQPPPATP. Residue Asn-100 is glycosylated (N-linked (GlcNAc...) asparagine). Residues 276–296 form a helical membrane-spanning segment; sequence ILACCLFLSVLVMLWLSCSTL. The short motif at 347-349 is the Microbody targeting signal element; the sequence is TKL.

The protein belongs to the TMEM59 family.

It localises to the golgi apparatus membrane. Modulates the O-glycosylation and complex N-glycosylation steps occurring during the Golgi maturation of APP. Inhibits APP transport to the cell surface and further shedding. The polypeptide is Transmembrane protein 59-like (TMEM59L) (Bos taurus (Bovine)).